A 951-amino-acid chain; its full sequence is UvrABC system protein A (951 aa).

ATP is bound at residue 33–40 (GLSGSGKS). The C4-type zinc-finger motif lies at 252–279 (CPICGFTVGELEPRLFSFNAPQGACPDC). ABC transporter domains are found at residues 309–587 (WNPI…RKSL) and 607–935 (GNGK…QYLK). Residue 639-646 (GVSGSGKS) participates in ATP binding. Residues 738–764 (CEACHGDGILKIEMNFLPDVFVPCEVC) form a C4-type zinc finger.

The protein belongs to the ABC transporter superfamily. UvrA family. Forms a heterotetramer with UvrB during the search for lesions.

The protein resides in the cytoplasm. In terms of biological role, the UvrABC repair system catalyzes the recognition and processing of DNA lesions. UvrA is an ATPase and a DNA-binding protein. A damage recognition complex composed of 2 UvrA and 2 UvrB subunits scans DNA for abnormalities. When the presence of a lesion has been verified by UvrB, the UvrA molecules dissociate. The sequence is that of UvrABC system protein A from Lactiplantibacillus plantarum (strain ATCC BAA-793 / NCIMB 8826 / WCFS1) (Lactobacillus plantarum).